The following is a 407-amino-acid chain: Dephospho-CoA kinase (407 aa).

Positions 3 to 201 constitute a DPCK domain; that stretch reads RIGLTGGIGA…ERIVPFAHNL (199 aa). 11 to 16 contacts ATP; it reads GAGKSA. Residues 196–407 form a UPF0157 region; it reads PFAHNLSTRQ…DWADSTGWKP (212 aa).

The protein in the N-terminal section; belongs to the CoaE family. It in the C-terminal section; belongs to the UPF0157 (GrpB) family.

The protein localises to the cytoplasm. The enzyme catalyses 3'-dephospho-CoA + ATP = ADP + CoA + H(+). Its pathway is cofactor biosynthesis; coenzyme A biosynthesis; CoA from (R)-pantothenate: step 5/5. Functionally, catalyzes the phosphorylation of the 3'-hydroxyl group of dephosphocoenzyme A to form coenzyme A. The protein is Dephospho-CoA kinase of Mycolicibacterium paratuberculosis (strain ATCC BAA-968 / K-10) (Mycobacterium paratuberculosis).